The sequence spans 189 residues: Lipid A acyltransferase PagP (189 aa).

The N-terminal stretch at 1 to 24 is a signal peptide; that stretch reads MLRRFSLFSLGFLGWLLVSGNASA. Residues histidine 61, aspartate 104, and serine 105 contribute to the active site.

Belongs to the lipid A palmitoyltransferase family. As to quaternary structure, homodimer.

The protein localises to the cell outer membrane. The enzyme catalyses a lipid A + a 1,2-diacyl-sn-glycero-3-phosphocholine = a hepta-acyl lipid A + a 2-acyl-sn-glycero-3-phosphocholine. It carries out the reaction a lipid IVA + a 1,2-diacyl-sn-glycero-3-phosphocholine = a lipid IVB + a 2-acyl-sn-glycero-3-phosphocholine. The catalysed reaction is a lipid IIA + a 1,2-diacyl-sn-glycero-3-phosphocholine = a lipid IIB + a 2-acyl-sn-glycero-3-phosphocholine. Transfers a fatty acid residue from the sn-1 position of a phospholipid to the N-linked hydroxyfatty acid chain on the proximal unit of lipid A or its precursors. This Klebsiella pneumoniae subsp. pneumoniae (strain ATCC 700721 / MGH 78578) protein is Lipid A acyltransferase PagP.